Here is a 263-residue protein sequence, read N- to C-terminus: Oxidoreductase UcpA (263 aa).

10 to 32 contacts NAD(+); that stretch reads LITGALQGIGEGIARTFARHGAN. Ser141 serves as a coordination point for substrate. Catalysis depends on Tyr155, which acts as the Proton acceptor.

The protein belongs to the short-chain dehydrogenases/reductases (SDR) family.

The protein is Oxidoreductase UcpA (ucpA) of Escherichia coli (strain K12).